The primary structure comprises 258 residues: Global transcriptional regulator CodY (258 aa).

Residues 1 to 156 (MSSLLTKTRM…SATIVGMEML (156 aa)) form a GAF domain region. Residues 204–223 (ASKIADKVGITRSVIVNALR) constitute a DNA-binding region (H-T-H motif).

The protein belongs to the CodY family.

The protein resides in the cytoplasm. In terms of biological role, DNA-binding global transcriptional regulator which is involved in the adaptive response to starvation and acts by directly or indirectly controlling the expression of numerous genes in response to nutrient availability. During rapid exponential growth, CodY is highly active and represses genes whose products allow adaptation to nutrient depletion. The chain is Global transcriptional regulator CodY from Clostridium beijerinckii (strain ATCC 51743 / NCIMB 8052) (Clostridium acetobutylicum).